Reading from the N-terminus, the 319-residue chain is MAQPSNYWKQDLLPLSILILTLVATECTIGIIASGIITVVNAVSWVQKRAVSITTRILLLLSVSRIGLQSIILIEMTSSIFNFSSYNSVLYRVSRVSFVFLNYCSLWFAALLSFFHFVKIANFSYPLFFKLKWRISELMPWLLWLSVFISFSSSMFFCNHKYTVYNNISLSSNICNFTMELYVAEANVVNVAFLFSFGILPPLTMFIATATLLIFSLRRHTLHMRNGDADSRNPRVEAHKQAIKETSCFLFLYILYAAVLFLSTSNIADASLFWSSVLRISLPVYPAGHSVLLIQSNPGLKRTWKQLLSQIHLHLQSRY.

The Extracellular segment spans residues 1–16; the sequence is MAQPSNYWKQDLLPLS. Residues 17–37 form a helical membrane-spanning segment; that stretch reads ILILTLVATECTIGIIASGII. Over 38–56 the chain is Cytoplasmic; that stretch reads TVVNAVSWVQKRAVSITTR. Residues 57–77 form a helical membrane-spanning segment; the sequence is ILLLLSVSRIGLQSIILIEMT. Residues 78 to 97 lie on the Extracellular side of the membrane; sequence SSIFNFSSYNSVLYRVSRVS. N-linked (GlcNAc...) asparagine glycosylation occurs at Asn-82. The chain crosses the membrane as a helical span at residues 98 to 118; that stretch reads FVFLNYCSLWFAALLSFFHFV. The Cytoplasmic portion of the chain corresponds to 119–137; it reads KIANFSYPLFFKLKWRISE. Residues 138-158 form a helical membrane-spanning segment; it reads LMPWLLWLSVFISFSSSMFFC. Residues 159–187 lie on the Extracellular side of the membrane; it reads NHKYTVYNNISLSSNICNFTMELYVAEAN. N-linked (GlcNAc...) asparagine glycosylation is found at Asn-167 and Asn-176. Residues 188–208 traverse the membrane as a helical segment; sequence VVNVAFLFSFGILPPLTMFIA. Topologically, residues 209 to 247 are cytoplasmic; it reads TATLLIFSLRRHTLHMRNGDADSRNPRVEAHKQAIKETS. The helical transmembrane segment at 248-268 threads the bilayer; the sequence is CFLFLYILYAAVLFLSTSNIA. The Extracellular segment spans residues 269–273; that stretch reads DASLF. Residues 274 to 294 form a helical membrane-spanning segment; sequence WSSVLRISLPVYPAGHSVLLI. The Cytoplasmic portion of the chain corresponds to 295–319; sequence QSNPGLKRTWKQLLSQIHLHLQSRY.

The protein belongs to the G-protein coupled receptor T2R family.

Its subcellular location is the membrane. In terms of biological role, putative taste receptor which may play a role in the perception of bitterness. The chain is Taste receptor type 2 member 39 from Rattus norvegicus (Rat).